A 178-amino-acid polypeptide reads, in one-letter code: 6,7-dimethyl-8-ribityllumazine synthase (178 aa).

5-amino-6-(D-ribitylamino)uracil-binding positions include Tyr-27, 58–60, and 82–84; these read SLE and CVI. 87-88 is a binding site for (2S)-2-hydroxy-3-oxobutyl phosphate; that stretch reads AT. His-90 serves as the catalytic Proton donor. Asn-114 lines the 5-amino-6-(D-ribitylamino)uracil pocket. Arg-128 lines the (2S)-2-hydroxy-3-oxobutyl phosphate pocket.

This sequence belongs to the DMRL synthase family.

The enzyme catalyses (2S)-2-hydroxy-3-oxobutyl phosphate + 5-amino-6-(D-ribitylamino)uracil = 6,7-dimethyl-8-(1-D-ribityl)lumazine + phosphate + 2 H2O + H(+). It participates in cofactor biosynthesis; riboflavin biosynthesis; riboflavin from 2-hydroxy-3-oxobutyl phosphate and 5-amino-6-(D-ribitylamino)uracil: step 1/2. Its function is as follows. Catalyzes the formation of 6,7-dimethyl-8-ribityllumazine by condensation of 5-amino-6-(D-ribitylamino)uracil with 3,4-dihydroxy-2-butanone 4-phosphate. This is the penultimate step in the biosynthesis of riboflavin. This is 6,7-dimethyl-8-ribityllumazine synthase from Jannaschia sp. (strain CCS1).